Here is a 124-residue protein sequence, read N- to C-terminus: Putative melanoma-associated antigen 5P (124 aa).

Residues 1 to 14 (MSLEQKSQHCKPEE) are compositionally biased toward basic and acidic residues. Disordered regions lie at residues 1–69 (MSLE…QGAS) and 82–103 (QSIK…DPES). Residues 3–124 (LEQKSQHCKP…DLIHFLLLKY (122 aa)) enclose the MAGE domain. Polar residues-rich tracts occupy residues 30-44 (AATT…SSSP) and 82-100 (QSIK…TSPD).

In terms of tissue distribution, expressed in many tumors of several types, such as melanoma, head and neck squamous cell carcinoma, lung carcinoma and breast carcinoma, but not in normal tissues except for testes.

In terms of biological role, may negatively regulates apoptosis. The chain is Putative melanoma-associated antigen 5P from Homo sapiens (Human).